The following is a 344-amino-acid chain: tRNA N6-adenosine threonylcarbamoyltransferase (344 aa).

Residues H115 and H119 each coordinate Fe cation. Substrate contacts are provided by residues 137-141 (LVSGG), D170, G183, D187, and N276. D306 is a binding site for Fe cation.

The protein belongs to the KAE1 / TsaD family. Fe(2+) serves as cofactor.

The protein localises to the cytoplasm. The enzyme catalyses L-threonylcarbamoyladenylate + adenosine(37) in tRNA = N(6)-L-threonylcarbamoyladenosine(37) in tRNA + AMP + H(+). Required for the formation of a threonylcarbamoyl group on adenosine at position 37 (t(6)A37) in tRNAs that read codons beginning with adenine. Is involved in the transfer of the threonylcarbamoyl moiety of threonylcarbamoyl-AMP (TC-AMP) to the N6 group of A37, together with TsaE and TsaB. TsaD likely plays a direct catalytic role in this reaction. This chain is tRNA N6-adenosine threonylcarbamoyltransferase, found in Limosilactobacillus fermentum (strain NBRC 3956 / LMG 18251) (Lactobacillus fermentum).